The sequence spans 199 residues: Inner membrane protein E199L (199 aa).

The N-linked (GlcNAc...) asparagine; by host glycan is linked to Asn131. The helical transmembrane segment at 150–170 (INVMNHPFLTLILIILILVII) threads the bilayer.

The protein belongs to the asfivirus E199L family. Interacts with host PYCR2; this interaction results in autophagy activation. Post-translationally, contains intramolecular disulfide bonds.

It localises to the virion membrane. It is found in the host membrane. In terms of biological role, essential for viral fusion with host endosomal membrane and core release. Not required for virus morphogenesis and egress. Induces complete autophagy through the interaction with and down-regulation of host PYCR2. This is Inner membrane protein E199L from African swine fever virus (isolate Tick/Malawi/Lil 20-1/1983) (ASFV).